A 700-amino-acid chain; its full sequence is Autophagy-related protein 13 (700 aa).

The segment at 319-352 is disordered; that stretch reads GSINSSSSPPPGATQSNQSVSSFSTSKPIPVTLN. Positions 332–344 are enriched in low complexity; that stretch reads TQSNQSVSSFSTS. The segment at 399-407 is ATG17-binding; sequence SSFGSRFRT. The tract at residues 428 to 487 is ATG1-binding; it reads TPNNPILHNFRSRNKSPSVSSTELGPSSSIYMDDDLDSFMKMLDSKPDLRFPSNSPSVYE. The span at 506–532 shows a compositional bias: polar residues; it reads EQQQHGSPSSNQIMIHSQSQTSQSQVF. Disordered regions lie at residues 506–562, 576–637, and 649–700; these read EQQQ…PGVS, HASS…NPEL, and ESDD…NQEF. Over residues 595 to 631 the composition is skewed to low complexity; that stretch reads SSPPASATAVATVHNSLRRLTSSSQRTNTNSTNSSTR. Positions 656 to 667 are enriched in basic and acidic residues; sequence DEHSPRSTDTKS.

This sequence belongs to the ATG13 family. Fungi subfamily. Hypophosphorylated form interacts with ATG1 to form the ATG1-ATG13 kinase complex. The ATG1-ATG13 complex interacts with the ATG17-ATG29-ATG31 complex through direct interaction with ATG17. Interacts with VAC8.

The protein localises to the cytoplasm. The protein resides in the preautophagosomal structure. Its function is as follows. Activates the ATG1 kinase in a nutritional condition dependent manner through the TOR pathway, leading to autophagy. Involved in ATG9 and ATG23 cycling through the pre-autophagosomal structure. Also involved in cytoplasm to vacuole transport (Cvt) and more specifically in Cvt vesicle formation. Seems to play a role in the switching machinery regulating the conversion between the Cvt pathway and autophagy. Finally, ATG13 is also required for glycogen storage during stationary phase. Acts as a negative regulator of xylose alcoholic fermentation, a role that is not related to autophagy. The polypeptide is Autophagy-related protein 13 (Ogataea parapolymorpha (strain ATCC 26012 / BCRC 20466 / JCM 22074 / NRRL Y-7560 / DL-1) (Yeast)).